The primary structure comprises 1081 residues: Cellulose synthase A catalytic subunit 1 [UDP-forming] (1081 aa).

The residue at position 1 (methionine 1) is an N-acetylmethionine. The Cytoplasmic portion of the chain corresponds to 1–270 (MEASAGLVAG…SRVVPIPSSR (270 aa)). Residues cysteine 39, cysteine 42, cysteine 58, cysteine 61, cysteine 66, cysteine 69, cysteine 81, and cysteine 84 each contribute to the Zn(2+) site. The RING-type; degenerate zinc-finger motif lies at 39-85 (CQICGDDVGLAETGDVFVACNECAFPVCRPCYEYERKDGTQCCPQCK). A disordered region spans residues 118–195 (GANKARHQRH…RQPVPVRIVD (78 aa)). The segment covering 127–139 (HGEEFSSSSRHES) has biased composition (basic and acidic residues). The segment covering 158-168 (PDTQSVRTTSG) has biased composition (polar residues). The chain crosses the membrane as a helical span at residues 271–291 (LTPYRVVIILRLIILCFFLQY). Topologically, residues 292–299 (RTTHPVKN) are extracellular. A helical membrane pass occupies residues 300–320 (AYPLWLTSVICEIWFAFSWLL). At 321–856 (DQFPKWYPIN…LLERIAYINT (536 aa)) the chain is on the cytoplasmic side. The UDP-alpha-D-glucose site is built by serine 359, lysine 365, glutamate 366, and aspartate 395. Aspartate 395 is a catalytic residue. The stretch at 449 to 476 (VKERRAMKREYEEFKVRINALVAKAQKI) forms a coiled coil. Lysine 536 contributes to the UDP-alpha-D-glucose binding site. 2 residues coordinate Mn(2+): lysine 537 and aspartate 561. Aspartate 780 is a catalytic residue. A helical membrane pass occupies residues 857 to 877 (IVYPITSIPLIAYCILPAFCL). Residues 878–889 (ITDRFIIPEISN) are Extracellular-facing. A helical transmembrane segment spans residues 890-910 (YASIWFILLFISIAVTGILEL). The Cytoplasmic segment spans residues 911–925 (RWSGVSIEDWWRNEQ). Residues 926–946 (FWVIGGTSAHLFAVFQGLLKV) traverse the membrane as a helical segment. Residues 947–976 (LAGIDTNFTVTSKATDEDGDFAELYIFKWT) lie on the Extracellular side of the membrane. Asparagine 953 carries an N-linked (GlcNAc...) asparagine glycan. The helical transmembrane segment at 977–997 (ALLIPPTTVLLVNLIGIVAGV) threads the bilayer. Residues 998–1008 (SYAVNSGYQSW) lie on the Cytoplasmic side of the membrane. Residues 1009–1029 (GPLFGKLFFALWVIAHLYPFL) form a helical membrane-spanning segment. Topologically, residues 1030–1038 (KGLLGRQNR) are extracellular. A helical transmembrane segment spans residues 1039–1059 (TPTIVIVWSVLLASIFSLLWV). Topologically, residues 1060-1081 (RINPFVDANPNANNFNGKGGVF) are cytoplasmic.

It belongs to the glycosyltransferase 2 family. Plant cellulose synthase subfamily. As to quaternary structure, interacts with CESA3 and CESA6. Assembly with CESA3 and CESA6 is required for functional complex in primary cell wall cellulose synthesis. Interacts with STL1 and STL2, but not with GOT1. Binds to CSI1. Interacts with PAT24/TIP1. It depends on Zn(2+) as a cofactor. Mn(2+) serves as cofactor. Post-translationally, S-acylated. As to expression, expressed in germinating seeds, seedlings, roots, stems, shoots leaves and flowers, but not in mature flowers.

It is found in the cell membrane. The catalysed reaction is [(1-&gt;4)-beta-D-glucosyl](n) + UDP-alpha-D-glucose = [(1-&gt;4)-beta-D-glucosyl](n+1) + UDP + H(+). Its pathway is glycan metabolism; plant cellulose biosynthesis. Catalytic subunit of cellulose synthase terminal complexes ('rosettes'), required for beta-1,4-glucan microfibril crystallization, a major mechanism of the cell wall formation. Involved in the primary cell wall formation. Required during embryogenesis for cell elongation, orientation of cell expansion and complex cell wall formations, such as interdigitated pattern of epidermal pavement cells, stomatal guard cells and trichomes. Plays a role in lateral roots formation, but seems not necessary for the development of tip-growing cells such as root hairs. The presence of each protein CESA1 and CESA6 is critical for cell expansion after germination. The polypeptide is Cellulose synthase A catalytic subunit 1 [UDP-forming] (Arabidopsis thaliana (Mouse-ear cress)).